We begin with the raw amino-acid sequence, 132 residues long: Small ribosomal subunit protein uS9 (132 aa).

Belongs to the universal ribosomal protein uS9 family.

This Blochmanniella pennsylvanica (strain BPEN) protein is Small ribosomal subunit protein uS9.